Here is a 952-residue protein sequence, read N- to C-terminus: UPF0182 protein SRU_2225 (952 aa).

The next 7 membrane-spanning stretches (helical) occupy residues Ile12 to Val32, Ala52 to Phe72, Leu109 to Trp129, Ala168 to Gly188, Leu207 to Tyr227, Val247 to Gly267, and Leu277 to Pro297. Positions Val917–Ser952 are disordered. Positions Ser931 to Ala940 are enriched in polar residues.

The protein belongs to the UPF0182 family.

The protein resides in the cell membrane. The polypeptide is UPF0182 protein SRU_2225 (Salinibacter ruber (strain DSM 13855 / M31)).